A 139-amino-acid chain; its full sequence is MKRGVLLNAPLSALVAQMGHTDEITVCDAGLPIPAGPERIDLALMAGTPNLQTVLKALLTDLVVEKVIMASEIKLISPDTHQALLDQIETHSLEQGKPIAIEYCLHEEFKTRSRQSKAIVRSGEITPYANLILCAGVAF.

His-20 acts as the Proton donor in catalysis. Substrate is bound by residues Asp-28, His-106, and 128–130 (YAN).

The protein belongs to the RbsD / FucU family. RbsD subfamily. In terms of assembly, homodecamer.

The protein localises to the cytoplasm. The catalysed reaction is beta-D-ribopyranose = beta-D-ribofuranose. It participates in carbohydrate metabolism; D-ribose degradation; D-ribose 5-phosphate from beta-D-ribopyranose: step 1/2. Functionally, catalyzes the interconversion of beta-pyran and beta-furan forms of D-ribose. This Aeromonas salmonicida (strain A449) protein is D-ribose pyranase.